Reading from the N-terminus, the 160-residue chain is D-aminoacyl-tRNA deacylase 2 (160 aa).

A Gly-transPro motif, allows the protein to recognize chirality of D-amino acids motif is present at residues 152–153; sequence GP.

It belongs to the DTD family. Homodimer.

It localises to the cytoplasm. The catalysed reaction is a D-aminoacyl-tRNA + H2O = a tRNA + a D-alpha-amino acid + H(+). It catalyses the reaction glycyl-tRNA(Ala) + H2O = tRNA(Ala) + glycine + H(+). The enzyme catalyses D-tyrosyl-tRNA(Tyr) + H2O = D-tyrosine + tRNA(Tyr). It carries out the reaction L-alanyl-tRNA(Thr) + H2O = tRNA(Thr) + L-alanine + H(+). In terms of biological role, deacylates mischarged D-aminoacyl-tRNAs. Also deacylates mischarged glycyl-tRNA(Ala), protecting cells against glycine mischarging by AlaRS. Probably acts by rejecting L-amino acids from its binding site rather than specific recognition of D-amino acids. Catalyzes the hydrolysis of D-tyrosyl-tRNA(Tyr), has no activity on correctly charged L-tyrosyl-tRNA(Tyr). By recycling D-aminoacyl-tRNA to D-amino acids and free tRNA molecules, this enzyme counteracts the toxicity associated with the formation of D-aminoacyl-tRNA entities in vivo and helps enforce protein L-homochirality. In contrast to DTD1, deacylates L-Ala mischarged on tRNA(Thr)(G4.U69) by alanine-tRNA ligase AARS. Can deacylate L-Ala due to a relaxed specificity for substrate chirality caused by the trans conformation of the Gly-Pro motif in the active site. Also hydrolyzes correctly charged, achiral, glycyl-tRNA(Gly) in vitro, although in vivo eef1a1a/EF-Tu may protect cognate achiral glycyl-tRNA(Gly) from DTD2-mediated deacetylation. The sequence is that of D-aminoacyl-tRNA deacylase 2 (dtd2) from Danio rerio (Zebrafish).